A 605-amino-acid chain; its full sequence is DNA mismatch repair protein MutL (605 aa).

It belongs to the DNA mismatch repair MutL/HexB family.

Functionally, this protein is involved in the repair of mismatches in DNA. It is required for dam-dependent methyl-directed DNA mismatch repair. May act as a 'molecular matchmaker', a protein that promotes the formation of a stable complex between two or more DNA-binding proteins in an ATP-dependent manner without itself being part of a final effector complex. The sequence is that of DNA mismatch repair protein MutL from Sinorhizobium medicae (strain WSM419) (Ensifer medicae).